Reading from the N-terminus, the 208-residue chain is Frataxin, mitochondrial (208 aa).

A mitochondrion-targeting transit peptide spans 1 to 40 (MWTFGRRAAAGLLPRTASRASAWVRNPRGRERIGTCGRRG).

This sequence belongs to the frataxin family. As to quaternary structure, component of the mitochondrial core iron-sulfur cluster (ISC) complex composed of NFS1, LYRM4, NDUFAB1, ISCU, FXN, and FDX2; this complex is a heterohexamer containing two copies of each monomer. Homodimer. Monomer (probable predominant form). Oligomer. Monomers and polymeric aggregates of &gt;1 MDa have been isolated from mitochondria. A small fraction of heterologous overexpressed recombinant frataxin forms high-molecular weight aggregates that incorporate iron. Interacts with LYRM4. Interacts (via ferrous form) with ISCU; the interaction is possible when both are bound to the dimeric form of the cysteine desulfurase complex (NFS1:LYRM4) and the interaction enhances FXN interaction to the dimeric form of the cysteine desulfurase complex (NFS1:LYRM4). Interacts with FECH; one iron-bound FXN monomer seems to interact with a FECH homodimer. Interacts with SDHA and SDHB. Interacts with ACO2; the interaction is dependent on citrate. Interacts with HSPA9. In terms of assembly, interacts with ACO1. Interacts with ISCU (cytoplasmic form). Processed in two steps by mitochondrial processing peptidase (MPP). MPP first cleaves the precursor to intermediate form and subsequently converts the intermediate to yield frataxin mature form (frataxin(81-210)) which is the predominant form. The additional forms, frataxin(56-210) and frataxin(78-210), seem to be produced when the normal maturation process is impaired; their physiological relevance is unsure.

It localises to the mitochondrion. It is found in the cytoplasm. Its subcellular location is the cytosol. The enzyme catalyses 4 Fe(2+) + O2 + 4 H(+) = 4 Fe(3+) + 2 H2O. Functions as an activator of persulfide transfer to the scaffoding protein ISCU as component of the core iron-sulfur cluster (ISC) assembly complex and participates to the [2Fe-2S] cluster assembly. Accelerates sulfur transfer from NFS1 persulfide intermediate to ISCU and to small thiols such as L-cysteine and glutathione leading to persulfuration of these thiols and ultimately sulfide release. Binds ferrous ion and is released from FXN upon the addition of both L-cysteine and reduced FDX2 during [2Fe-2S] cluster assembly. The core iron-sulfur cluster (ISC) assembly complex is involved in the de novo synthesis of a [2Fe-2S] cluster, the first step of the mitochondrial iron-sulfur protein biogenesis. This process is initiated by the cysteine desulfurase complex (NFS1:LYRM4:NDUFAB1) that produces persulfide which is delivered on the scaffold protein ISCU in a FXN-dependent manner. Then this complex is stabilized by FDX2 which provides reducing equivalents to accomplish the [2Fe-2S] cluster assembly. Finally, the [2Fe-2S] cluster is transferred from ISCU to chaperone proteins, including HSCB, HSPA9 and GLRX5. May play a role in the protection against iron-catalyzed oxidative stress through its ability to catalyze the oxidation of Fe(2+) to Fe(3+); the oligomeric form but not the monomeric form has in vitro ferroxidase activity. May be able to store large amounts of iron in the form of a ferrihydrite mineral by oligomerization; however, the physiological relevance is unsure as reports are conflicting and the function has only been shown using heterologous overexpression systems. May function as an iron chaperone protein that protects the aconitase [4Fe-4S]2+ cluster from disassembly and promotes enzyme reactivation. May play a role as a high affinity iron binding partner for FECH that is capable of both delivering iron to ferrochelatase and mediating the terminal step in mitochondrial heme biosynthesis. Its function is as follows. Modulates the RNA-binding activity of ACO1. May be involved in the cytoplasmic iron-sulfur protein biogenesis. May contribute to oxidative stress resistance and overall cell survival. The chain is Frataxin, mitochondrial from Rattus norvegicus (Rat).